Reading from the N-terminus, the 460-residue chain is MTVVGDVAPIPRRNSSTCSNDIAAPLLPECHGDEVAHDEFNGASFSGAVFNLATTIIGAGIMALPATMKILGLGLGITMIVVMAFLTDASIEFLLRFSKAGKNRSYGGLMGGSFGNPGRILLQVAVLVNNIGVLIVYMIIIGDVLAGKTEDGIHHFGVLEGWFGHHWWNGRAAILLITTLGVFAPLACFKRIDSLKFTSALSVALAVVFLIITAGISIMKLISGGVAMPRLLPDVTDLTSFWNLFTVVPVLVTAFICHYNVHSIQNELEDPSQIRPVVRSALMLCSSVYIMTSIFGFLLFGDDTLDDVLANFDTDLGIPFGSILNDAVRVSYALHLMLVFPIVFYPLRINIDGLLFPSARSLSTSNVRFGCLTAGLISVIFLGANFIPSIWDAFQFTGATAAVCLGFIFPASIILKDRHDKATNRDTTLAIFMIVLAVLSNAIAIYSDAYALFKKNAPRE.

The next 11 helical transmembrane spans lie at 45-65 (FSGA…MALP), 66-86 (ATMK…MAFL), 120-140 (ILLQ…YMII), 172-192 (AAIL…FKRI), 199-219 (SALS…ISIM), 238-258 (LTSF…FICH), 281-301 (ALML…LLFG), 336-356 (LMLV…GLLF), 371-391 (CLTA…PSIW), 394-414 (FQFT…ASII), and 427-447 (TTLA…AIYS).

It belongs to the amino acid/polyamine transporter 2 family. Amino acid/auxin permease (AAAP) (TC 2.A.18.6) subfamily.

The protein resides in the membrane. The protein is Amino acid transporter AVT6A of Arabidopsis thaliana (Mouse-ear cress).